We begin with the raw amino-acid sequence, 496 residues long: Genome polyprotein (496 aa).

The Extracellular portion of the chain corresponds to 1–447 (SRCTHLENRD…HTVLGGAFNS (447 aa)). Cystine bridges form between Cys-3–Cys-30, Cys-60–Cys-116, Cys-60–Cys-121, Cys-74–Cys-105, Cys-92–Cys-116, and Cys-92–Cys-121. Residues 98 to 111 (DRGWGNHCGLFGKG) form a fusion peptide region. A glycan (N-linked (GlcNAc...) asparagine; by host) is linked at Asn-154. Intrachain disulfides connect Cys-186–Cys-290 and Cys-307–Cys-338. A helical membrane pass occupies residues 448–468 (IFGGVGFLPKLLMGVALAWLG). Over 469–479 (LNTRNPTMSMS) the chain is Cytoplasmic. A helical transmembrane segment spans residues 480 to 496 (FLMAGGLVLAMTLGVGA).

In terms of assembly, homodimer; in the endoplasmic reticulum and Golgi. In terms of processing, N-glycosylated.

The protein resides in the virion membrane. Its subcellular location is the host endoplasmic reticulum membrane. Functionally, binds to host cell surface receptor and mediates fusion between viral and cellular membranes. Envelope protein is synthesized in the endoplasmic reticulum in the form of heterodimer with protein prM. They play a role in virion budding in the ER, and the newly formed immature particle is covered with 60 spikes composed of heterodimer between precursor prM and envelope protein E. The virion is transported to the Golgi apparatus where the low pH causes dissociation of PrM-E heterodimers and formation of E homodimers. prM-E cleavage is ineficient, and many virions are only partially matured. These uncleaved prM would play a role in immune evasion. In Bos taurus (Bovine), this protein is Genome polyprotein.